The chain runs to 252 residues: Probable transcriptional regulatory protein Tmel_0985 (252 aa).

Belongs to the TACO1 family.

The protein localises to the cytoplasm. The chain is Probable transcriptional regulatory protein Tmel_0985 from Thermosipho melanesiensis (strain DSM 12029 / CIP 104789 / BI429).